The following is a 629-amino-acid chain: EF-hand calcium-binding domain-containing protein 7 (629 aa).

The disordered stretch occupies residues 1–25; the sequence is MAISPRSDATFSSQKSTPSESPRTK. The span at 7 to 21 shows a compositional bias: polar residues; the sequence is SDATFSSQKSTPSES. EF-hand domains lie at 102-137 and 138-173; these read TSKA…RGEK and MTRE…TNEQ. Residues 195–229 are disordered; sequence NHIEGSPERDPSPVPKPSPKITRKTDPETFLNKGD. Residues S200 and S212 each carry the phosphoserine modification. One can recognise an EF-hand 3 domain in the interval 403–438; it reads EFKSTLSDIFEVIDLDGNGLLSLEEYNFFELRTSGE. Ca(2+)-binding residues include D416, D418, N420, and E427.

As to quaternary structure, component of the EvC complex composed of EFCAB7, IQCE, EVC2 and EVC; built from two subcomplexes, EVC2:EVC and EFCAB7:IQCE. Interacts (via EF-hand 1 and 2) with IQCE (via N-terminus); this interaction anchors the EVC-EVC2 complex in a signaling microdomain at the base of cilia and stimulates the Hedgehog (Hh) pathway. Interacts with EVC2 (via N-terminal end). Interacts with EVC.

The protein resides in the cell projection. It is found in the cilium membrane. Component of the EvC complex that positively regulates ciliary Hedgehog (Hh) signaling. Required for the localization of the EVC2:EVC subcomplex at the base of primary cilia. The sequence is that of EF-hand calcium-binding domain-containing protein 7 (EFCAB7) from Homo sapiens (Human).